The sequence spans 271 residues: 2-aminophenol 1,6-dioxygenase subunit alpha (271 aa).

This sequence belongs to the LigB/MhpB extradiol dioxygenase family. The APD complex is a heterotetramer of 2 alpha (CnbCa) and 2 beta (CnbCb) subunits.

It functions in the pathway xenobiotic degradation; nitrobenzene degradation. Its pathway is xenobiotic degradation; 4-chloronitrobenzene degradation. In terms of biological role, component of the 2-aminophenol 1,6-dioxygenase (APD) complex that catalyzes the ring fission of 2-aminophenol to produce 2-aminomuconic semialdehyde. CnbCa may have a role in the stability of the complex. The complex is also active on other substrates such as 2-amino-5-chlorophenol (68% activity), protocatechuate (33% activity) and catechol (5% activity). Both 2-aminophenol and 2-amino-5-cholorophenol are likely native substrates for this dioxygenase which is involved in the reductive degradation pathway of both nitrobenzene (NB) and 4-chloronitrobenzene (4-CNB), allowing C.testosteroni strain CNB-1 to grow on these compounds as sole source of carbon, nitrogen, and energy. This is 2-aminophenol 1,6-dioxygenase subunit alpha from Comamonas testosteroni (Pseudomonas testosteroni).